We begin with the raw amino-acid sequence, 464 residues long: Cyclin-dependent kinase 8 (464 aa).

The interval M1 to R15 is interaction with CCNC. The Protein kinase domain maps to E21 to F335. ATP is bound by residues V27 to V35 and K52. D151 acts as the Proton acceptor in catalysis. A disordered region spans residues F358 to Y464. Positions Q373–Q391 are enriched in low complexity. Polar residues-rich tracts occupy residues P409 to N426 and P436 to Y464.

It belongs to the protein kinase superfamily. CMGC Ser/Thr protein kinase family. CDC2/CDKX subfamily. As to quaternary structure, component of the Mediator complex, which is composed of MED1, MED4, MED6, MED7, MED8, MED9, MED10, MED11, MED12, MED13, MED13L, MED14, MED15, MED16, MED17, MED18, MED19, MED20, MED21, MED22, MED23, MED24, MED25, MED26, MED27, MED29, MED30, MED31, CCNC, CDK8 and CDC2L6/CDK11. The MED12, MED13, CCNC and CDK8 subunits form a distinct module termed the CDK8 module. Mediator containing the CDK8 module is less active than Mediator lacking this module in supporting transcriptional activation. Individual preparations of the Mediator complex lacking one or more distinct subunits have been variously termed ARC, CRSP, DRIP, PC2, SMCC and TRAP. The cylin/CDK pair formed by CCNC/CDK8 also associates with the large subunit of RNA polymerase II. Interacts with CTNNB1, GLI3 and MAML1. Mg(2+) serves as cofactor.

It localises to the nucleus. The enzyme catalyses L-seryl-[protein] + ATP = O-phospho-L-seryl-[protein] + ADP + H(+). It catalyses the reaction L-threonyl-[protein] + ATP = O-phospho-L-threonyl-[protein] + ADP + H(+). It carries out the reaction [DNA-directed RNA polymerase] + ATP = phospho-[DNA-directed RNA polymerase] + ADP + H(+). In terms of biological role, component of the Mediator complex, a coactivator involved in regulated gene transcription of nearly all RNA polymerase II-dependent genes. Mediator functions as a bridge to convey information from gene-specific regulatory proteins to the basal RNA polymerase II transcription machinery. Mediator is recruited to promoters by direct interactions with regulatory proteins and serves as a scaffold for the assembly of a functional pre-initiation complex with RNA polymerase II and the general transcription factors. Phosphorylates the CTD (C-terminal domain) of the large subunit of RNA polymerase II (RNAp II), which may inhibit the formation of a transcription initiation complex. Phosphorylates CCNH leading to down-regulation of the TFIIH complex and transcriptional repression. Recruited through interaction with MAML1 to hyperphosphorylate the intracellular domain of NOTCH, leading to its degradation. In Mus musculus (Mouse), this protein is Cyclin-dependent kinase 8 (Cdk8).